The primary structure comprises 141 residues: Transmembrane protein 216 (141 aa).

The next 4 helical transmembrane spans lie at 15 to 35 (VLFF…LLIF), 49 to 69 (LVLD…RLFF), 82 to 102 (LGIS…YLLL), and 115 to 135 (SILL…LATF).

Part of the tectonic-like complex (also named B9 complex). Interacts with TMEM107.

It is found in the membrane. It localises to the cytoplasm. The protein localises to the cytoskeleton. Its subcellular location is the cilium basal body. In terms of biological role, part of the tectonic-like complex which is required for tissue-specific ciliogenesis and may regulate ciliary membrane composition. The polypeptide is Transmembrane protein 216 (Tmem216) (Mus musculus (Mouse)).